The sequence spans 206 residues: Probable N-acetyltransferase 14 (206 aa).

Positions 55-206 constitute an N-acetyltransferase domain; sequence LRFVLASFAL…TLVREFSKEL (152 aa). The helical transmembrane segment at 57-77 threads the bilayer; it reads FVLASFALALLLPVFLAVAAM.

The protein belongs to the camello family.

It localises to the membrane. Its function is as follows. Probable acetyltransferase. In terms of biological role, may act as a transcription factor regulating the expression of coproporphyrinogen oxidase by binding to a promoter regulatory element. The chain is Probable N-acetyltransferase 14 from Bos taurus (Bovine).